The chain runs to 117 residues: Large ribosomal subunit protein bL20c (117 aa).

The protein belongs to the bacterial ribosomal protein bL20 family.

It is found in the plastid. The protein resides in the chloroplast. Functionally, binds directly to 23S ribosomal RNA and is necessary for the in vitro assembly process of the 50S ribosomal subunit. It is not involved in the protein synthesizing functions of that subunit. This is Large ribosomal subunit protein bL20c from Platanus occidentalis (Sycamore).